A 602-amino-acid polypeptide reads, in one-letter code: Potassium voltage-gated channel subfamily A member 5 (602 aa).

The tract at residues 1–202 (MEISLVPLEN…FYQLGDEAME (202 aa)) is tetramerization domain. The Cytoplasmic portion of the chain corresponds to 1 to 238 (MEISLVPLEN…LIFEYPESSG (238 aa)). A disordered region spans residues 58 to 107 (EDANQGGRPLPPMAQELPQPRRLSAEDEEGEGDPGLGTVEEDQAPQDAGS). Position 81 is a phosphoserine; by CK2 and PKA (Ser-81). A Glycyl lysine isopeptide (Lys-Gly) (interchain with G-Cter in SUMO) cross-link involves residue Lys-212. A helical membrane pass occupies residues 239–260 (SARAIAIVSVLVILISIITFCL). At 261–314 (ETLPEFRDERELLRHPPVPPQPPAPAPGINGSVSGALSSGPTVAPLLPRTLADP) the chain is on the extracellular side. Residues 315-336 (FFIVETTCVIWFTFELLVRFFA) form a helical membrane-spanning segment. A lipid anchor (S-palmitoyl cysteine) is attached at Cys-337. Residues 337-347 (CPSKAEFSRNI) lie on the Cytoplasmic side of the membrane. A helical transmembrane segment spans residues 348–368 (MNIIDVVAIFPYFITLGTELA). At 369-384 (EQQPGGGGQNGQQAMS) the chain is on the extracellular side. The chain crosses the membrane as a helical; Voltage-sensor span at residues 385-405 (LAILRVIRLVRVFRIFKLSRH). Residues 406–420 (SKGLQILGKTLQASM) lie on the Cytoplasmic side of the membrane. The S4-S5 linker stretch occupies residues 407 to 420 (KGLQILGKTLQASM). Residues 421–442 (RELGLLIFFLFIGVILFSSAVY) traverse the membrane as a helical segment. The Extracellular portion of the chain corresponds to 443 to 456 (FAEADNHGSHFSSI). The helical intramembrane region spans 457 to 468 (PDAFWWAVVTMT). A Selectivity filter motif is present at residues 469-474 (TVGYGD). An intramembrane segment occupies 469–476 (TVGYGDMR). Residues 477-483 (PITVGGK) are Extracellular-facing. A helical membrane pass occupies residues 484 to 512 (IVGSLCAIAGVLTIALPVPVIVSNFNYFY). Residues 513 to 602 (HRETDHEEQA…CLDTSRETDL (90 aa)) lie on the Cytoplasmic side of the membrane. A compositionally biased stretch (basic and acidic residues) spans 523-536 (ALKEEQGNQRRESG). Positions 523-543 (ALKEEQGNQRRESGLDTGGQR) are disordered. A Glycyl lysine isopeptide (Lys-Gly) (interchain with G-Cter in SUMO) cross-link involves residue Lys-525. 3 positions are modified to phosphoserine; by PKA: Ser-535, Ser-546, and Ser-569. The PDZ-binding motif lies at 600-602 (TDL).

The protein belongs to the potassium channel family. A (Shaker) (TC 1.A.1.2) subfamily. Kv1.5/KCNA5 sub-subfamily. Homotetramer and heterotetramer of potassium channel proteins. Interacts with DLG1, which enhances channel currents. Forms a ternary complex with DLG1 and CAV3. Interacts with KCNAB1. Interacts with UBE2I. Interacts with XIRP2; the interaction is required for normal action potential configuration in the heart. Post-translationally, glycosylated. In terms of processing, sumoylated on Lys-212, and Lys-525, preferentially with SUMO3. Sumoylation regulates the voltage sensitivity of the channel. As to expression, expressed equally in atrium, ventricle, aorta and skeletal muscle. Weaker expression in brain.

It is found in the cell membrane. The enzyme catalyses K(+)(in) = K(+)(out). Its function is as follows. Voltage-gated potassium channel that mediates transmembrane potassium transport in excitable membranes. Forms tetrameric potassium-selective channels through which potassium ions pass in accordance with their electrochemical gradient. The channel alternates between opened and closed conformations in response to the voltage difference across the membrane. Can form functional homotetrameric channels and heterotetrameric channels that contain variable proportions of KCNA1, KCNA2, KCNA4, KCNA5, and possibly other family members as well; channel properties depend on the type of alpha subunits that are part of the channel. Channel properties are modulated by cytoplasmic beta subunits that regulate the subcellular location of the alpha subunits and promote rapid inactivation. Homotetrameric channels display rapid activation and slow inactivation. Required for normal electrical conduction including formation of the infranodal ventricular conduction system and normal action potential configuration, as a result of its interaction with XIRP2. May play a role in regulating the secretion of insulin in normal pancreatic islets. The polypeptide is Potassium voltage-gated channel subfamily A member 5 (Kcna5) (Rattus norvegicus (Rat)).